A 464-amino-acid chain; its full sequence is tRNA-2-methylthio-N(6)-dimethylallyladenosine synthase (464 aa).

In terms of domain architecture, MTTase N-terminal spans 19–135 (GSYWITTFGC…LENLLGKVDL (117 aa)). Cys-28, Cys-64, Cys-98, Cys-170, Cys-174, and Cys-177 together coordinate [4Fe-4S] cluster. Residues 156–393 (RESSICGWVN…NELVETTSKQ (238 aa)) enclose the Radical SAM core domain. One can recognise a TRAM domain in the interval 396–464 (ERYLDSIESV…PFSLTGILCL (69 aa)).

This sequence belongs to the methylthiotransferase family. MiaB subfamily. Monomer. Requires [4Fe-4S] cluster as cofactor.

It localises to the cytoplasm. It carries out the reaction N(6)-dimethylallyladenosine(37) in tRNA + (sulfur carrier)-SH + AH2 + 2 S-adenosyl-L-methionine = 2-methylsulfanyl-N(6)-dimethylallyladenosine(37) in tRNA + (sulfur carrier)-H + 5'-deoxyadenosine + L-methionine + A + S-adenosyl-L-homocysteine + 2 H(+). Its function is as follows. Catalyzes the methylthiolation of N6-(dimethylallyl)adenosine (i(6)A), leading to the formation of 2-methylthio-N6-(dimethylallyl)adenosine (ms(2)i(6)A) at position 37 in tRNAs that read codons beginning with uridine. This chain is tRNA-2-methylthio-N(6)-dimethylallyladenosine synthase, found in Prochlorococcus marinus (strain MIT 9215).